A 447-amino-acid chain; its full sequence is Tubulin beta chain (447 aa).

Gln-11, Glu-69, Ser-138, Gly-142, Thr-143, Gly-144, Asn-204, and Asn-226 together coordinate GTP. Position 69 (Glu-69) interacts with Mg(2+). The segment at 427–447 is disordered; that stretch reads EAHMDDEEAEEAYEDEAPPEE. The segment covering 430–447 has biased composition (acidic residues); that stretch reads MDDEEAEEAYEDEAPPEE.

This sequence belongs to the tubulin family. As to quaternary structure, dimer of alpha and beta chains. A typical microtubule is a hollow water-filled tube with an outer diameter of 25 nm and an inner diameter of 15 nM. Alpha-beta heterodimers associate head-to-tail to form protofilaments running lengthwise along the microtubule wall with the beta-tubulin subunit facing the microtubule plus end conferring a structural polarity. Microtubules usually have 13 protofilaments but different protofilament numbers can be found in some organisms and specialized cells. The cofactor is Mg(2+).

Its subcellular location is the cytoplasm. It localises to the cytoskeleton. In terms of biological role, tubulin is the major constituent of microtubules, a cylinder consisting of laterally associated linear protofilaments composed of alpha- and beta-tubulin heterodimers. Microtubules grow by the addition of GTP-tubulin dimers to the microtubule end, where a stabilizing cap forms. Below the cap, tubulin dimers are in GDP-bound state, owing to GTPase activity of alpha-tubulin. This Uromyces fabae (Rust fungus) protein is Tubulin beta chain (TBB1).